Reading from the N-terminus, the 257-residue chain is Imidazole glycerol phosphate synthase subunit HisF (257 aa).

Residues Asp11 and Asp130 contribute to the active site.

It belongs to the HisA/HisF family. Heterodimer of HisH and HisF.

Its subcellular location is the cytoplasm. It catalyses the reaction 5-[(5-phospho-1-deoxy-D-ribulos-1-ylimino)methylamino]-1-(5-phospho-beta-D-ribosyl)imidazole-4-carboxamide + L-glutamine = D-erythro-1-(imidazol-4-yl)glycerol 3-phosphate + 5-amino-1-(5-phospho-beta-D-ribosyl)imidazole-4-carboxamide + L-glutamate + H(+). Its pathway is amino-acid biosynthesis; L-histidine biosynthesis; L-histidine from 5-phospho-alpha-D-ribose 1-diphosphate: step 5/9. In terms of biological role, IGPS catalyzes the conversion of PRFAR and glutamine to IGP, AICAR and glutamate. The HisF subunit catalyzes the cyclization activity that produces IGP and AICAR from PRFAR using the ammonia provided by the HisH subunit. This is Imidazole glycerol phosphate synthase subunit HisF from Shewanella baltica (strain OS223).